The primary structure comprises 169 residues: Probable calcium-binding protein CML13 (169 aa).

A disordered region spans residues 1 to 26 (MSTVKGQTRRERPRGARPHGLTKQKR). Residues 15–24 (GARPHGLTKQ) are compositionally biased toward basic residues. EF-hand domains lie at 24-59 (QKRQ…LGFE), 60-95 (MTEE…KIGE), 97-132 (DSKE…LGEN), and 133-168 (FTYQ…TGYG). Residues Asp-37, Asp-39, Ser-41, Thr-43, Glu-48, Asp-73, Asp-75, Ser-77, Ser-79, Glu-84, Asp-110, Asp-112, Asn-114, Lys-116, Asp-121, Asp-146, Asn-148, Asp-150, Glu-152, and Glu-157 each coordinate Ca(2+).

Its function is as follows. Potential calcium sensor. The protein is Probable calcium-binding protein CML13 (CML13) of Oryza sativa subsp. japonica (Rice).